The following is a 901-amino-acid chain: Protein translocase subunit SecA (901 aa).

Residues Gln-87, 105–109 (GEGKT), and Asp-512 each bind ATP. Positions 859–901 (HQDDDSAAAAALAAQTGERKVGRNDPCPCGSGKKYKQCHGRLQ) are disordered. The Zn(2+) site is built by Cys-885, Cys-887, Cys-896, and His-897. Over residues 891 to 901 (KKYKQCHGRLQ) the composition is skewed to basic residues.

Belongs to the SecA family. Monomer and homodimer. Part of the essential Sec protein translocation apparatus which comprises SecA, SecYEG and auxiliary proteins SecDF-YajC and YidC. Zn(2+) is required as a cofactor.

It is found in the cell inner membrane. The protein localises to the cytoplasm. It carries out the reaction ATP + H2O + cellular proteinSide 1 = ADP + phosphate + cellular proteinSide 2.. Its function is as follows. Part of the Sec protein translocase complex. Interacts with the SecYEG preprotein conducting channel. Has a central role in coupling the hydrolysis of ATP to the transfer of proteins into and across the cell membrane, serving both as a receptor for the preprotein-SecB complex and as an ATP-driven molecular motor driving the stepwise translocation of polypeptide chains across the membrane. The protein is Protein translocase subunit SecA of Escherichia coli O139:H28 (strain E24377A / ETEC).